Reading from the N-terminus, the 429-residue chain is D-inositol 3-phosphate glycosyltransferase (429 aa).

His20 is a binding site for 1D-myo-inositol 3-phosphate. UDP-N-acetyl-alpha-D-glucosamine contacts are provided by residues 26-27 (QP) and Gly34. 1D-myo-inositol 3-phosphate contacts are provided by residues 31–36 (DAGGMN), Lys89, Tyr122, Thr146, and Arg166. Residues Arg240, Lys245, and Gln306 each coordinate UDP-N-acetyl-alpha-D-glucosamine. Mg(2+)-binding residues include Tyr315, Arg316, and Ala318. UDP-N-acetyl-alpha-D-glucosamine-binding residues include Glu328 and Glu336. Thr342 contributes to the Mg(2+) binding site.

This sequence belongs to the glycosyltransferase group 1 family. MshA subfamily. As to quaternary structure, homodimer.

It catalyses the reaction 1D-myo-inositol 3-phosphate + UDP-N-acetyl-alpha-D-glucosamine = 1D-myo-inositol 2-acetamido-2-deoxy-alpha-D-glucopyranoside 3-phosphate + UDP + H(+). In terms of biological role, catalyzes the transfer of a N-acetyl-glucosamine moiety to 1D-myo-inositol 3-phosphate to produce 1D-myo-inositol 2-acetamido-2-deoxy-glucopyranoside 3-phosphate in the mycothiol biosynthesis pathway. In Nocardiopsis dassonvillei (strain ATCC 23218 / DSM 43111 / CIP 107115 / JCM 7437 / KCTC 9190 / NBRC 14626 / NCTC 10488 / NRRL B-5397 / IMRU 509) (Actinomadura dassonvillei), this protein is D-inositol 3-phosphate glycosyltransferase.